The following is a 549-amino-acid chain: Ceramide kinase 1 (549 aa).

Residues 162–316 (NRPKNIIIFI…VDVCTVHQHQ (155 aa)) enclose the DAGKc domain. ATP contacts are provided by residues 172–174 (NPF) and 205–209 (TERAN). 233–236 (GGDG) is a substrate binding site. Asp235 acts as the Proton donor/acceptor in catalysis. ATP contacts are provided by residues Glu240, 277–279 (GSA), Arg342, Arg348, and 500–502 (DGE).

The catalysed reaction is an N-acylsphing-4-enine + ATP = an N-acylsphing-4-enine 1-phosphate + ADP + H(+). The enzyme catalyses an N-acyl-15-methylhexadecasphing-4-enine + ATP = an N-acyl-15-methylhexadecasphing-4-enine-1-phosphate + ADP + H(+). It functions in the pathway lipid metabolism; sphingolipid metabolism. Catalyzes the phosphorylation of ceramide to form ceramide 1-phosphate. C.elegans contain specific sphingoid bases, which are unique or different in structure compared to the sphingoid bases found in other animals. Two examples of these distinctive compounds are: 15-methylhexadecasphinganine and 15-methylhexadecasphing-4-enine. The polypeptide is Ceramide kinase 1 (Caenorhabditis elegans).